A 184-amino-acid polypeptide reads, in one-letter code: Flavin prenyltransferase UbiX (184 aa).

FMN-binding positions include 9–11 (GAS), S34, 85–88 (SMKT), and R120. Dimethylallyl phosphate-binding residues include Y150 and R166.

This sequence belongs to the UbiX/PAD1 family.

The enzyme catalyses dimethylallyl phosphate + FMNH2 = prenylated FMNH2 + phosphate. In terms of biological role, flavin prenyltransferase that catalyzes the synthesis of the prenylated FMN cofactor (prenyl-FMN) for 4-hydroxy-3-polyprenylbenzoic acid decarboxylase UbiD. The prenyltransferase is metal-independent and links a dimethylallyl moiety from dimethylallyl monophosphate (DMAP) to the flavin N5 and C6 atoms of FMN. The polypeptide is Flavin prenyltransferase UbiX (Methanocaldococcus jannaschii (strain ATCC 43067 / DSM 2661 / JAL-1 / JCM 10045 / NBRC 100440) (Methanococcus jannaschii)).